The primary structure comprises 602 residues: Phosphoenolpyruvate carboxykinase [GTP] (602 aa).

Substrate contacts are provided by residues Arg-89 and 211–213 (YAG). Residues Lys-220 and His-239 each contribute to the Mn(2+) site. Ser-260 provides a ligand contact to substrate. 261 to 266 (GSGKTS) provides a ligand contact to GTP. Ser-262 is an active-site residue. Asp-277 contacts Mn(2+). 367-369 (NAR) provides a ligand contact to substrate. The GTP site is built by Arg-369 and Arg-400.

Belongs to the phosphoenolpyruvate carboxykinase [GTP] family. The cofactor is Mn(2+).

Its subcellular location is the cytoplasm. It carries out the reaction oxaloacetate + GTP = phosphoenolpyruvate + GDP + CO2. The protein operates within carbohydrate biosynthesis; gluconeogenesis. Functionally, catalyzes the conversion of oxaloacetate (OAA) to phosphoenolpyruvate (PEP), the rate-limiting step in the metabolic pathway that produces glucose from lactate and other precursors derived from the citric acid cycle. This Sulfurisphaera tokodaii (strain DSM 16993 / JCM 10545 / NBRC 100140 / 7) (Sulfolobus tokodaii) protein is Phosphoenolpyruvate carboxykinase [GTP].